Here is a 441-residue protein sequence, read N- to C-terminus: BTB/POZ domain-containing protein At2g24240 (441 aa).

One can recognise a BTB domain in the interval 6–76 (DRIKFNVGGR…LRTGDLNVPA (71 aa)).

It participates in protein modification; protein ubiquitination. In terms of biological role, may act as a substrate-specific adapter of an E3 ubiquitin-protein ligase complex (CUL3-RBX1-BTB) which mediates the ubiquitination and subsequent proteasomal degradation of target proteins. The sequence is that of BTB/POZ domain-containing protein At2g24240 from Arabidopsis thaliana (Mouse-ear cress).